Reading from the N-terminus, the 353-residue chain is Protein RecA (353 aa).

68 to 75 contacts ATP; it reads GPESSGKT.

It belongs to the RecA family.

The protein resides in the cytoplasm. Functionally, can catalyze the hydrolysis of ATP in the presence of single-stranded DNA, the ATP-dependent uptake of single-stranded DNA by duplex DNA, and the ATP-dependent hybridization of homologous single-stranded DNAs. It interacts with LexA causing its activation and leading to its autocatalytic cleavage. This chain is Protein RecA, found in Roseiflexus sp. (strain RS-1).